The chain runs to 374 residues: C-X-C chemokine receptor type 5 (374 aa).

Topologically, residues 1–57 are extracellular; that stretch reads MNYPLTLDMGSITYNMDDLYKELAFYSNSTEIPLQDSNFCSTVEGPLLTSFKAVFMP. Asparagine 28 carries N-linked (GlcNAc...) asparagine glycosylation. A helical membrane pass occupies residues 58–78; it reads VAYSLIFLLGMMGNILVLVIL. Residues 79–90 lie on the Cytoplasmic side of the membrane; that stretch reads ERHRHTRSSTET. A helical membrane pass occupies residues 91–111; the sequence is FLFHLAVADLLLVFILPFAVA. The Extracellular portion of the chain corresponds to 112 to 126; the sequence is EGSVGWVLGTFLCKT. Cysteines 124 and 204 form a disulfide. The chain crosses the membrane as a helical span at residues 127–147; sequence VIALHKINFYCSSLLLACIAV. The Cytoplasmic portion of the chain corresponds to 148–169; that stretch reads DRYLAIVHAVHAYRRRRLLSIH. Residues 170 to 190 traverse the membrane as a helical segment; that stretch reads ITCTAIWLAGFLFALPELLFA. The Extracellular segment spans residues 191–221; the sequence is KVGQPHNNDSLPQCTFSQENEAETRAWFTSR. Asparagine 198 is a glycosylation site (N-linked (GlcNAc...) asparagine). A helical membrane pass occupies residues 222–242; the sequence is FLYHIGGFLLPMLVMGWCYVG. Residues 243-261 lie on the Cytoplasmic side of the membrane; sequence VVHRLLQAQRRPQRQKAVR. The chain crosses the membrane as a helical span at residues 262–282; that stretch reads VAILVTSIFFLCWSPYHIVIF. The Extracellular portion of the chain corresponds to 283-306; it reads LDTLERLKAVNSSCELSGYLSVAI. Residues 307–327 form a helical membrane-spanning segment; sequence TLCEFLGLAHCCLNPMLYTFA. Topologically, residues 328-374 are cytoplasmic; the sequence is GVKFRSDLSRLLTKLGCAGPASLCQLFPNWRKSSLSESENATSLTTF.

The protein belongs to the G-protein coupled receptor 1 family. In terms of tissue distribution, mainly in spleen, in resting B-cells.

The protein localises to the cell membrane. Its function is as follows. Cytokine receptor that binds to B-lymphocyte chemoattractant (BLC). Involved in B-cell migration into B-cell follicles of spleen and Peyer patches but not into those of mesenteric or peripheral lymph nodes. The sequence is that of C-X-C chemokine receptor type 5 (Cxcr5) from Mus musculus (Mouse).